Here is a 1430-residue protein sequence, read N- to C-terminus: 3'-5' RNA helicase YTHDC2 (1430 aa).

The interval 1 to 37 is disordered; the sequence is MSRPSSVSPRQPAPGGGGGGGPSPCGPGGGGRAKGLK. Over residues 14-33 the composition is skewed to gly residues; sequence PGGGGGGGPSPCGPGGGGRA. One can recognise an R3H domain in the interval 38–106; that stretch reads DIRIDEEVKI…NRYLTVKKKD (69 aa). The Helicase ATP-binding domain occupies 203-369; it reads VKIIKENKVV…FGSCPVIYIQ (167 aa). ATP is bound at residue 216-223; sequence GETGSGKT. A DEAH box motif is present at residues 316-319; that stretch reads DEVH. ANK repeat units lie at residues 506–538 and 539–571; these read TSAT…SKAS and NGWM…FGNL. Residues 612 to 784 form the Helicase C-terminal domain; it reads LLYNICHSCD…ELCLHTKLLA (173 aa). Residues Ser-1089, Ser-1090, and Ser-1092 each carry the phosphoserine modification. The span at 1164–1174 shows a compositional bias: polar residues; the sequence is EQSAGLQQPSG. Residues 1164-1288 are disordered; sequence EQSAGLQQPS…SPSPRPNMPV (125 aa). Residues 1191-1200 show a composition bias toward low complexity; that stretch reads SSWRSNNSRK. Ser-1202 is modified (phosphoserine). Over residues 1231-1249 the composition is skewed to basic and acidic residues; the sequence is KYKDRGILHPKRGTEDRSD. Low complexity predominate over residues 1250–1264; the sequence is QSSLKSTDSSSYPSP. Ser-1263, Ser-1267, and Ser-1281 each carry phosphoserine. The YTH domain maps to 1288–1418; it reads VRYFIMKSSN…LVGEQLLQLW (131 aa). RNA-binding positions include 1294-1296, Trp-1310, and Trp-1360; that span reads KSS.

This sequence belongs to the DEAD box helicase family. DEAH subfamily. In terms of assembly, interacts with MEIOC; binds transcripts that regulate the mitotic cell cycle inhibiting progression into metaphase, thereby allowing meiotic prophase to proceed normally. Interacts (via ANK repeats) with XRN1. Interacts with ZCCHC4. Associates with the small ribosomal subunit. Interacts with RBM46. Expressed in testis. Not detected in spermatogonia next to the tubule wall but is strongly expressed in spermatocytes, suggesting that it is up-regulated in germ cells upon entry into meiosis.

It is found in the cytoplasm. It localises to the perinuclear region. It catalyses the reaction ATP + H2O = ADP + phosphate + H(+). Functionally, 3'-5' RNA helicase that plays a key role in the male and female germline by promoting transition from mitotic to meiotic divisions in stem cells. Specifically recognizes and binds N6-methyladenosine (m6A)-containing RNAs, a modification present at internal sites of mRNAs and some non-coding RNAs that plays a role in the efficiency of RNA processing and stability. Essential for ensuring a successful progression of the meiotic program in the germline by regulating the level of m6A-containing RNAs. Acts by binding and promoting degradation of m6A-containing mRNAs: the 3'-5' RNA helicase activity is required for this process and RNA degradation may be mediated by XRN1 exoribonuclease. Required for both spermatogenesis and oogenesis. This chain is 3'-5' RNA helicase YTHDC2, found in Homo sapiens (Human).